The primary structure comprises 323 residues: GILT-like protein C02D5.2 (323 aa).

The chain crosses the membrane as a helical span at residues 13–32 (LICRPILTFSSLHILTAFLI). The N-linked (GlcNAc...) asparagine glycan is linked to asparagine 35. The next 2 membrane-spanning stretches (helical) occupy residues 37–59 (SYIN…HRFL) and 87–104 (YIYG…YRSL). Residue asparagine 289 is glycosylated (N-linked (GlcNAc...) asparagine).

Belongs to the GILT family.

It is found in the membrane. This chain is GILT-like protein C02D5.2, found in Caenorhabditis elegans.